Reading from the N-terminus, the 262-residue chain is 14-3-3-like protein A (262 aa).

Residues 240–262 (DNAEEGGDEIKEAASKPEGEGHS) form a disordered region. Residues 247 to 262 (DEIKEAASKPEGEGHS) show a composition bias toward basic and acidic residues.

Belongs to the 14-3-3 family.

The sequence is that of 14-3-3-like protein A from Hordeum vulgare (Barley).